The primary structure comprises 303 residues: Acetyl-coenzyme A carboxylase carboxyl transferase subunit beta (303 aa).

The region spanning 25-294 (LWIKCPETGE…NDVSAKSLNG (270 aa)) is the CoA carboxyltransferase N-terminal domain.

It belongs to the AccD/PCCB family. Acetyl-CoA carboxylase is a heterohexamer composed of biotin carboxyl carrier protein (AccB), biotin carboxylase (AccC) and two subunits each of ACCase subunit alpha (AccA) and ACCase subunit beta (AccD).

Its subcellular location is the cytoplasm. The catalysed reaction is N(6)-carboxybiotinyl-L-lysyl-[protein] + acetyl-CoA = N(6)-biotinyl-L-lysyl-[protein] + malonyl-CoA. Its pathway is lipid metabolism; malonyl-CoA biosynthesis; malonyl-CoA from acetyl-CoA: step 1/1. In terms of biological role, component of the acetyl coenzyme A carboxylase (ACC) complex. Biotin carboxylase (BC) catalyzes the carboxylation of biotin on its carrier protein (BCCP) and then the CO(2) group is transferred by the transcarboxylase to acetyl-CoA to form malonyl-CoA. This Rhizobium rhizogenes (strain K84 / ATCC BAA-868) (Agrobacterium radiobacter) protein is Acetyl-coenzyme A carboxylase carboxyl transferase subunit beta.